Here is a 397-residue protein sequence, read N- to C-terminus: Elongation factor Tu (397 aa).

The tr-type G domain occupies lysine 10 to glutamine 207. Residues glycine 19 to threonine 26 are G1. Residue glycine 19 to threonine 26 coordinates GTP. Threonine 26 is a Mg(2+) binding site. Residues glycine 60–alanine 64 form a G2 region. Residues aspartate 81–glycine 84 are G3. GTP contacts are provided by residues aspartate 81–histidine 85 and asparagine 136–aspartate 139. Positions asparagine 136–aspartate 139 are G4. The G5 stretch occupies residues serine 174 to leucine 176.

It belongs to the TRAFAC class translation factor GTPase superfamily. Classic translation factor GTPase family. EF-Tu/EF-1A subfamily. Monomer.

It localises to the cytoplasm. It carries out the reaction GTP + H2O = GDP + phosphate + H(+). Functionally, GTP hydrolase that promotes the GTP-dependent binding of aminoacyl-tRNA to the A-site of ribosomes during protein biosynthesis. This chain is Elongation factor Tu, found in Lawsonia intracellularis (strain PHE/MN1-00).